The primary structure comprises 527 residues: (3S)-3-amino-3-(3-chloro-4-hydroxyphenyl)propanoyl-[peptidyl-carrier protein SgcC2] monooxygenase (527 aa).

Residues 1–10 are compositionally biased toward basic and acidic residues; it reads MPHGAEREAS. The segment at 1–22 is disordered; it reads MPHGAEREASPAEESAGTRPLT. FAD contacts are provided by residues 161–163, 167–170, and T202; these read HAF and PVDR.

This sequence belongs to the FADH(2)-utilizing monooxygenase family. As to quaternary structure, homotetramer.

It catalyses the reaction (3S)-3-amino-3-(3-chloro-4-hydroxyphenyl)propanoyl-[SgcC2 peptidyl-carrier protein] + FADH2 + O2 = (3S)-3-amino-3-(3-chloro-4,5-dihydroxyphenyl)propanoyl-[SgcC2 peptidyl-carrier protein] + FAD + H2O + H(+). The protein operates within antibiotic biosynthesis. With respect to regulation, the SgcE6-SgcC hydroxylation activity decreases in the presence of excess FAD. Oxygenase component of a two-component system involved in the biosynthesis of the enediyne antitumor antibiotic C-1027. Uses FADH(2) supplied by SgcE6 to catalyze the C-5 hydroxylation of (S)-3-chloro-beta-tyrosyl-S-SgcC2. Can also efficiently catalyze the regioselective hydroxylation of other 3-substituted beta-tyrosyl-S-SgcC2 analogs, including the bromo-, iodo-, fluoro-, and methyl-substituted analogs, but does not accept 3-hydroxy-beta-tyrosyl-S-SgcC2 as a substrate. Is only active with SgcC2 (peptidyl carrier protein)-tethered substrates. This chain is (3S)-3-amino-3-(3-chloro-4-hydroxyphenyl)propanoyl-[peptidyl-carrier protein SgcC2] monooxygenase, found in Streptomyces globisporus.